The following is a 165-amino-acid chain: Cytochrome c-type biogenesis protein CcmE (165 aa).

The Cytoplasmic segment spans residues 1 to 29; the sequence is MSATAEDNARGAKPAGNFARTVSQRKRKR. A helical; Signal-anchor for type II membrane protein membrane pass occupies residues 30-50; it reads LFLIGGALAVLAVAVGLMLMA. Over 51-165 the chain is Periplasmic; the sequence is FSQDIRFFRT…LKEKGVWEGK (115 aa). Residues His-143 and Tyr-147 each coordinate heme.

Belongs to the CcmE/CycJ family.

The protein localises to the cell inner membrane. Functionally, heme chaperone required for the biogenesis of c-type cytochromes. Transiently binds heme delivered by CcmC and transfers the heme to apo-cytochromes in a process facilitated by CcmF and CcmH. The polypeptide is Cytochrome c-type biogenesis protein CcmE (Brucella anthropi (strain ATCC 49188 / DSM 6882 / CCUG 24695 / JCM 21032 / LMG 3331 / NBRC 15819 / NCTC 12168 / Alc 37) (Ochrobactrum anthropi)).